The chain runs to 349 residues: MPMPPDDSALSLLPDHPLAAHNTFGIAARARFAARITQAAQFEALHRDPRVANLPQLVLGGGSNIVFTRDFDGVVLLDEIAGRRVVREDDDAWYVEAGGGENWHAFVAWTLEHGMPGLENLALIPGTVGAAPIQNIGAYGLEMKAYFDSLVAVELATGRRERFDAARCAFGYRDSFFKREGRGRFAIVAVTFRLPKQWTPRLGYADVTRELDARGITPEAATPRDVFDAVVAIRRAKLPDPLVLGNAGSFFKNPVIDAAQFDALRARAPDVVSYPQPDGQVKLAAGWLIDRCGWKGRALGAAAVHDRQALVLVNRGGATGADVLALARAIQADVRAQFGVELEAEPVCL.

Positions Gly-25–Gln-197 constitute an FAD-binding PCMH-type domain. Residue Arg-173 is part of the active site. The active-site Proton donor is Ser-249. Residue Glu-345 is part of the active site.

The protein belongs to the MurB family. It depends on FAD as a cofactor.

It localises to the cytoplasm. The catalysed reaction is UDP-N-acetyl-alpha-D-muramate + NADP(+) = UDP-N-acetyl-3-O-(1-carboxyvinyl)-alpha-D-glucosamine + NADPH + H(+). Its pathway is cell wall biogenesis; peptidoglycan biosynthesis. In terms of biological role, cell wall formation. This chain is UDP-N-acetylenolpyruvoylglucosamine reductase, found in Burkholderia cenocepacia (strain HI2424).